A 400-amino-acid polypeptide reads, in one-letter code: S-adenosylmethionine synthase (400 aa).

Histidine 17 lines the ATP pocket. Aspartate 19 contributes to the Mg(2+) binding site. Glutamate 45 contributes to the K(+) binding site. Positions 58 and 101 each coordinate L-methionine. A flexible loop region spans residues 101–111; it reads QSADIAMGVDQ. ATP contacts are provided by residues 177–179, 244–245, aspartate 253, 259–260, alanine 276, and lysine 280; these read DGK, RF, and RK. Residue aspartate 253 coordinates L-methionine. Lysine 284 is an L-methionine binding site.

It belongs to the AdoMet synthase family. As to quaternary structure, homotetramer; dimer of dimers. Mg(2+) serves as cofactor. K(+) is required as a cofactor.

It is found in the cytoplasm. It catalyses the reaction L-methionine + ATP + H2O = S-adenosyl-L-methionine + phosphate + diphosphate. Its pathway is amino-acid biosynthesis; S-adenosyl-L-methionine biosynthesis; S-adenosyl-L-methionine from L-methionine: step 1/1. Catalyzes the formation of S-adenosylmethionine (AdoMet) from methionine and ATP. The overall synthetic reaction is composed of two sequential steps, AdoMet formation and the subsequent tripolyphosphate hydrolysis which occurs prior to release of AdoMet from the enzyme. This Bacillus velezensis (strain DSM 23117 / BGSC 10A6 / LMG 26770 / FZB42) (Bacillus amyloliquefaciens subsp. plantarum) protein is S-adenosylmethionine synthase.